A 347-amino-acid polypeptide reads, in one-letter code: Haptoglobin (347 aa).

Positions 1–18 (MRALGAVVALLLCGQLFA) are cleaved as a signal peptide. A Sushi domain is found at 31-88 (DSCPKPPEIPKGYVEHMVRYHCQTYYKLRTAGDGVYTLDSNKQWTNKVTGEKLPECEA). Intrachain disulfides connect Cys52/Cys86 and Cys90/Cys207. Positions 103 to 345 (IMGGSLDAKG…ILDWIQTTIA (243 aa)) constitute a Peptidase S1 domain. N-linked (GlcNAc...) asparagine glycosylation is found at Asn125, Asn151, Asn183, and Asn232. 2 disulfides stabilise this stretch: Cys250–Cys281 and Cys292–Cys322. The interval 259–264 (VPEKKT) is interaction with CD163.

Belongs to the peptidase S1 family. In terms of assembly, tetramer of two alpha and two beta chains; disulfide-linked. The hemoglobin/haptoglobin complex is composed of a haptoglobin dimer bound to two hemoglobin alpha-beta dimers. Interacts with CD163. Interacts with ERGIC3. As to expression, expressed by the liver and secreted in plasma.

Its subcellular location is the secreted. As a result of hemolysis, hemoglobin is found to accumulate in the kidney and is secreted in the urine. Haptoglobin captures, and combines with free plasma hemoglobin to allow hepatic recycling of heme iron and to prevent kidney damage. Haptoglobin also acts as an antioxidant, has antibacterial activity and plays a role in modulating many aspects of the acute phase response. Hemoglobin/haptoglobin complexes are rapidly cleared by the macrophage CD163 scavenger receptor expressed on the surface of liver Kupfer cells through an endocytic lysosomal degradation pathway. This is Haptoglobin (HP) from Sus scrofa (Pig).